A 1546-amino-acid polypeptide reads, in one-letter code: DNA-directed RNA polymerase subunit beta' (1546 aa).

Zn(2+)-binding residues include Cys-57, Cys-59, Cys-72, and Cys-75. Mg(2+) is bound by residues Asp-756, Asp-758, and Asp-760. Residues Cys-1130, Cys-1211, Cys-1218, and Cys-1221 each contribute to the Zn(2+) site. The disordered stretch occupies residues 1512 to 1546 (LEKYGEGSTSSDAVTGGQRYDDTRPGSSINPGYGD). Polar residues predominate over residues 1536–1546 (PGSSINPGYGD).

This sequence belongs to the RNA polymerase beta' chain family. The RNAP catalytic core consists of 2 alpha, 1 beta, 1 beta' and 1 omega subunit. When a sigma factor is associated with the core the holoenzyme is formed, which can initiate transcription. The cofactor is Mg(2+). It depends on Zn(2+) as a cofactor.

It carries out the reaction RNA(n) + a ribonucleoside 5'-triphosphate = RNA(n+1) + diphosphate. DNA-dependent RNA polymerase catalyzes the transcription of DNA into RNA using the four ribonucleoside triphosphates as substrates. This is DNA-directed RNA polymerase subunit beta' from Deinococcus radiodurans (strain ATCC 13939 / DSM 20539 / JCM 16871 / CCUG 27074 / LMG 4051 / NBRC 15346 / NCIMB 9279 / VKM B-1422 / R1).